Consider the following 554-residue polypeptide: Probable urocanate hydratase (554 aa).

NAD(+)-binding positions include 49–50 (GG), Gln127, Glu194, 240–241 (NA), 261–265 (QTAAH), 271–272 (YI), and Tyr320. The active site involves Cys408. Position 490 (Gly490) interacts with NAD(+).

It belongs to the urocanase family. The cofactor is NAD(+).

It localises to the cytoplasm. The catalysed reaction is 4-imidazolone-5-propanoate = trans-urocanate + H2O. The protein operates within amino-acid degradation; L-histidine degradation into L-glutamate; N-formimidoyl-L-glutamate from L-histidine: step 2/3. In terms of biological role, catalyzes the conversion of urocanate to 4-imidazolone-5-propionate. This Thermoplasma acidophilum (strain ATCC 25905 / DSM 1728 / JCM 9062 / NBRC 15155 / AMRC-C165) protein is Probable urocanate hydratase.